Here is a 342-residue protein sequence, read N- to C-terminus: Glycerol-1-phosphate dehydrogenase [NAD(P)+] (342 aa).

NAD(+)-binding positions include 84-88 (GRPLD) and 106-109 (TSAS). D111 serves as a coordination point for substrate. S115 contributes to the NAD(+) binding site. D160 serves as a coordination point for substrate. Positions 160 and 241 each coordinate Zn(2+). Substrate is bound at residue H245. Position 260 (H260) interacts with Zn(2+).

The protein belongs to the glycerol-1-phosphate dehydrogenase family. In terms of assembly, homodimer. Requires Zn(2+) as cofactor.

The protein localises to the cytoplasm. The catalysed reaction is sn-glycerol 1-phosphate + NAD(+) = dihydroxyacetone phosphate + NADH + H(+). It catalyses the reaction sn-glycerol 1-phosphate + NADP(+) = dihydroxyacetone phosphate + NADPH + H(+). Its pathway is membrane lipid metabolism; glycerophospholipid metabolism. Catalyzes the NAD(P)H-dependent reduction of dihydroxyacetonephosphate (DHAP or glycerone phosphate) to glycerol 1-phosphate (G1P). The G1P thus generated is used as the glycerophosphate backbone of phospholipids in the cellular membranes of Archaea. This chain is Glycerol-1-phosphate dehydrogenase [NAD(P)+], found in Pyrobaculum neutrophilum (strain DSM 2338 / JCM 9278 / NBRC 100436 / V24Sta) (Thermoproteus neutrophilus).